The following is a 239-amino-acid chain: Purine nucleoside phosphorylase DeoD-type (239 aa).

His5 is a binding site for a purine D-ribonucleoside. Phosphate-binding positions include Gly21, Arg25, Arg44, and 88-91 (RVGS). A purine D-ribonucleoside-binding positions include 180 to 182 (EME) and 204 to 205 (SD). The Proton donor role is filled by Asp205.

The protein belongs to the PNP/UDP phosphorylase family. In terms of assembly, homohexamer; trimer of homodimers.

It catalyses the reaction a purine D-ribonucleoside + phosphate = a purine nucleobase + alpha-D-ribose 1-phosphate. The enzyme catalyses a purine 2'-deoxy-D-ribonucleoside + phosphate = a purine nucleobase + 2-deoxy-alpha-D-ribose 1-phosphate. Its function is as follows. Catalyzes the reversible phosphorolytic breakdown of the N-glycosidic bond in the beta-(deoxy)ribonucleoside molecules, with the formation of the corresponding free purine bases and pentose-1-phosphate. This chain is Purine nucleoside phosphorylase DeoD-type, found in Salmonella agona (strain SL483).